A 296-amino-acid chain; its full sequence is Nucleotide-binding protein SAG0531 (296 aa).

13–20 (GMSGAGKT) is a binding site for ATP. 63–66 (DMRS) provides a ligand contact to GTP.

It belongs to the RapZ-like family.

Displays ATPase and GTPase activities. In Streptococcus agalactiae serotype V (strain ATCC BAA-611 / 2603 V/R), this protein is Nucleotide-binding protein SAG0531.